A 168-amino-acid chain; its full sequence is SsrA-binding protein (168 aa).

Belongs to the SmpB family.

The protein localises to the cytoplasm. Functionally, required for rescue of stalled ribosomes mediated by trans-translation. Binds to transfer-messenger RNA (tmRNA), required for stable association of tmRNA with ribosomes. tmRNA and SmpB together mimic tRNA shape, replacing the anticodon stem-loop with SmpB. tmRNA is encoded by the ssrA gene; the 2 termini fold to resemble tRNA(Ala) and it encodes a 'tag peptide', a short internal open reading frame. During trans-translation Ala-aminoacylated tmRNA acts like a tRNA, entering the A-site of stalled ribosomes, displacing the stalled mRNA. The ribosome then switches to translate the ORF on the tmRNA; the nascent peptide is terminated with the 'tag peptide' encoded by the tmRNA and targeted for degradation. The ribosome is freed to recommence translation, which seems to be the essential function of trans-translation. The protein is SsrA-binding protein of Mycobacterium sp. (strain JLS).